The following is a 210-amino-acid chain: Large ribosomal subunit protein uL3 (210 aa).

Positions 122 to 155 (NQKRNNFGRGPMSHGSKNHRAPGSIGAGTTPGRV) are disordered.

It belongs to the universal ribosomal protein uL3 family. As to quaternary structure, part of the 50S ribosomal subunit. Forms a cluster with proteins L14 and L19.

Functionally, one of the primary rRNA binding proteins, it binds directly near the 3'-end of the 23S rRNA, where it nucleates assembly of the 50S subunit. This chain is Large ribosomal subunit protein uL3, found in Nostoc punctiforme (strain ATCC 29133 / PCC 73102).